We begin with the raw amino-acid sequence, 317 residues long: L-lactate dehydrogenase (317 aa).

NAD(+) is bound by residues Val-17, Asp-38, Lys-43, Tyr-69, and 83–84 (GA). Residues Gln-86 and Arg-92 each coordinate substrate. NAD(+) is bound by residues Ser-105, 122–124 (ATN), and Ser-147. 124-127 (NPVD) is a substrate binding site. 152-155 (DTAR) provides a ligand contact to substrate. 2 residues coordinate beta-D-fructose 1,6-bisphosphate: Arg-157 and His-172. His-179 serves as the catalytic Proton acceptor. Tyr-224 is subject to Phosphotyrosine. Position 233 (Thr-233) interacts with substrate.

It belongs to the LDH/MDH superfamily. LDH family. In terms of assembly, homotetramer.

It localises to the cytoplasm. The enzyme catalyses (S)-lactate + NAD(+) = pyruvate + NADH + H(+). Its pathway is fermentation; pyruvate fermentation to lactate; (S)-lactate from pyruvate: step 1/1. With respect to regulation, allosterically activated by fructose 1,6-bisphosphate (FBP). Its function is as follows. Catalyzes the conversion of lactate to pyruvate. The polypeptide is L-lactate dehydrogenase (Bacillus caldolyticus).